Here is a 299-residue protein sequence, read N- to C-terminus: Taste receptor type 2 member 4 (299 aa).

At 1 to 9 the chain is on the extracellular side; it reads MLWLFYSSA. The chain crosses the membrane as a helical span at residues 10 to 30; that stretch reads IIASVILDFVGIIMSLFITVV. Over 31–46 the chain is Cytoplasmic; that stretch reads NYKTWVKSHRISSSER. A helical transmembrane segment spans residues 47 to 67; it reads ILFSLGITRFFMLALFLVNTI. Residues 68–81 are Extracellular-facing; that stretch reads YFVSSNKERSVYLS. Residues 82 to 102 traverse the membrane as a helical segment; sequence AFFVLCFMFLDSSSLWFVTLL. At 103–131 the chain is on the cytoplasmic side; that stretch reads NSLYCVKITNFQHSVFLLLKRNISPKIPR. A helical transmembrane segment spans residues 132–152; the sequence is LLPACVLISAFTTCLYITLSQ. Residues 153–172 lie on the Extracellular side of the membrane; it reads ASPFPELVTKRNNTSFNISE. N-linked (GlcNAc...) asparagine glycosylation is found at asparagine 164, asparagine 165, and asparagine 169. Residues 173 to 193 traverse the membrane as a helical segment; sequence GILSLVVSFVLSSSLQFIINV. Residues 194-230 are Cytoplasmic-facing; that stretch reads TSASLLIYSLRRHIRKMQKNATGFWNPQTEAHVGAMK. Residues 231 to 251 traverse the membrane as a helical segment; the sequence is LMIYFLILYIPYSVATLVQYL. Residues 252–262 lie on the Extracellular side of the membrane; sequence PFYAGMDMGTK. A helical membrane pass occupies residues 263-283; it reads SICLIFATLYSPGHSVLIIIT. Residues 284 to 299 are Cytoplasmic-facing; it reads HPKLKTTAKKILCFKK.

It belongs to the G-protein coupled receptor T2R family.

The protein localises to the membrane. Its subcellular location is the cell projection. The protein resides in the cilium membrane. Functionally, gustducin-coupled receptor implicated in the perception of bitter compounds in the oral cavity and the gastrointestinal tract. Signals through PLCB2 and the calcium-regulated cation channel TRPM5. In airway epithelial cells, binding of denatonium increases the intracellular calcium ion concentration and stimulates ciliary beat frequency. The sequence is that of Taste receptor type 2 member 4 (TAS2R4) from Papio hamadryas (Hamadryas baboon).